Consider the following 2148-residue polypeptide: Polyketide synthase 1 (2148 aa).

Residues 19–261 form an N-terminal acylcarrier protein transacylase domain (SAT) region; the sequence is FIFGDQSSCN…TPLAVHAPYH (243 aa). One can recognise a Ketosynthase family 3 (KS3) domain in the interval 394 to 829; it reads ESKIAIIGMS…GGNTALLVED (436 aa). Active-site for beta-ketoacyl synthase activity residues include C566, H701, and H745. The segment at 929 to 1233 is malonyl-CoA:ACP transacylase (MAT) domain; sequence AFVFSGQGSQ…PSLMRNKDGW (305 aa). Catalysis depends on S1018, which acts as the For acyl/malonyl transferase activity. Residues 1310–1624 form a product template (PT) domain region; sequence TASVHRIVHE…RKVLNTAMPP (315 aa). Residues 1314-1447 are N-terminal hotdog fold; it reads HRIVHESVDK…SSLHFEQPKV (134 aa). Residues 1314-1619 form the PKS/mFAS DH domain; it reads HRIVHESVDK…FQGIPRKVLN (306 aa). H1346 functions as the Proton acceptor; for dehydratase activity in the catalytic mechanism. Residues 1474–1619 form a C-terminal hotdog fold region; it reads LNSRMSSGVI…FQGIPRKVLN (146 aa). The active-site Proton donor; for dehydratase activity is D1533. Residues 1619 to 1657 are disordered; that stretch reads NTAMPPPKSQNEAPVRSAPAKPAAKPPKSASSEHSGHFA. Low complexity predominate over residues 1635-1650; it reads SAPAKPAAKPPKSASS. In terms of domain architecture, Carrier 1 spans 1678-1752; sequence RNPMLAVFKI…DLATHLGLDT (75 aa). S1712 carries the O-(pantetheine 4'-phosphoryl)serine modification. Over residues 1755-1790 the composition is skewed to low complexity; sequence SDQSSGQSSSSGGLSPRSDSIGEITSSATTPPSLSP. The tract at residues 1755–1796 is disordered; that stretch reads SDQSSGQSSSSGGLSPRSDSIGEITSSATTPPSLSPRGSVSG. The region spanning 1793–1870 is the Carrier 2 domain; that stretch reads SVSGSQCKDV…SFKHMFQQGH (78 aa). Residue S1830 is modified to O-(pantetheine 4'-phosphoryl)serine. Positions 1882-2146 are thioesterase (TE) domain; that stretch reads LKQYRATSTL…ERVAAFIRST (265 aa). S1973 serves as the catalytic For thioesterase activity.

Polyketide synthase; part of the Pks1 gene cluster that mediates the biosynthesis of an anthraquinone derivative pigment that contributes to conidial pigmentation that provides protection from UV radiation, heat and cold stress. The polyketide synthase Pks1 produces 1-acetyl-2,4,6,8-tetrahydroxy-9,10-anthraquinone though condensation of acetyl-CoA with malonyl-CoA. The dehydratase EthD and the laccase Mlac1 further convert the anthraquinone derivative into the final conidial pigment. The chain is Polyketide synthase 1 from Metarhizium guizhouense (strain ARSEF 977).